A 759-amino-acid polypeptide reads, in one-letter code: Forkhead box protein M1 (759 aa).

2 disordered regions span residues 1–54 and 94–165; these read MRTS…AESS and KGKE…QRQE. The span at 36-54 shows a compositional bias: polar residues; that stretch reads PGQQEPTQAQASQDVAESS. The segment covering 141–151 has biased composition (low complexity); sequence LGPKPGAKGVP. Residues Lys200 and Lys324 each participate in a glycyl lysine isopeptide (Lys-Gly) (interchain with G-Cter in SUMO2) cross-link. The fork-head DNA-binding region spans 234 to 326; the sequence is ERPPYSYMAM…LTLDQVFKPL (93 aa). Residues 328–349 are disordered; that stretch reads PGSPQSPEHLESQQKRPNPELR. Position 330 is a phosphoserine (Ser330). Positions 335-349 are enriched in basic and acidic residues; that stretch reads EHLESQQKRPNPELR. A Glycyl lysine isopeptide (Lys-Gly) (interchain with G-Cter in SUMO2) cross-link involves residue Lys355. Residue Ser375 is modified to Phosphoserine; by CHEK2. Residues Lys421 and Lys439 each participate in a glycyl lysine isopeptide (Lys-Gly) (interchain with G-Cter in SUMO2) cross-link. Phosphoserine is present on Ser521. 3 disordered regions span residues 530–556, 572–643, and 681–706; these read LVTK…CLDE, MEIL…PQGA, and LASD…LQVP. The segment covering 531–542 has biased composition (basic and acidic residues); sequence VTKRREKREVSR. The span at 604–613 shows a compositional bias: polar residues; the sequence is PVSSTPSKSV. At Thr608 the chain carries Phosphothreonine; by CDK1. Thr624 is subject to Phosphothreonine. Phosphoserine; by PLK1 is present on residues Ser726 and Ser735.

In terms of processing, phosphorylated in M (mitotic) phase. Phosphorylation by the checkpoint kinase CHEK2 in response to DNA damage increases the FOXM1 protein stability probably stimulating the transcription of genes involved in DNA repair. Phosphorylated by CDK1 in late S and G2 phases, creating docking sites for the POLO box domains of PLK1. Subsequently, PLK1 binds and phosphorylates FOXM1, leading to activation of transcriptional activity and subsequent enhanced expression of key mitotic regulators. Phosphorylated by GSK3B leading to ubiquitination and proteasomal degradation. Highly expressed in thymus and testis, but weakly in intestine and lung. Appears to be expressed only in adult organs containing proliferating/cycling cells or in response to growth factors.

It is found in the nucleus. Its function is as follows. Transcription factor regulating the expression of cell cycle genes essential for DNA replication and mitosis. Plays a role in the control of cell proliferation. Also plays a role in DNA break repair, participating in the DNA damage checkpoint response. Promotes transcription of PHB2. In Rattus norvegicus (Rat), this protein is Forkhead box protein M1 (Foxm1).